The primary structure comprises 42 residues: Crotamine Ile-19 (42 aa).

3 disulfide bridges follow: cysteine 4-cysteine 36, cysteine 11-cysteine 30, and cysteine 18-cysteine 37.

Belongs to the crotamine-myotoxin family. Monomer. As to expression, expressed by the venom gland.

It is found in the secreted. Functionally, cationic peptide that possesses multiple functions. It acts as a cell-penetrating peptide (CPP), and as a potent voltage-gated potassium channel (Kv) inhibitor, it induces severe muscle necrosis by a non-enzymatic mechanism and exhibits antimicrobial activities. It also elicits a short-lasting hyperextension of the hind limb. It does not cause observable tissue damage (whereas the whole venom causes severe myonecrosis accompanied by edema and hemorrhage). The chain is Crotamine Ile-19 from Crotalus durissus ruruima (South American rattlesnake).